We begin with the raw amino-acid sequence, 169 residues long: SsrA-binding protein (169 aa).

The protein belongs to the SmpB family.

It localises to the cytoplasm. Its function is as follows. Required for rescue of stalled ribosomes mediated by trans-translation. Binds to transfer-messenger RNA (tmRNA), required for stable association of tmRNA with ribosomes. tmRNA and SmpB together mimic tRNA shape, replacing the anticodon stem-loop with SmpB. tmRNA is encoded by the ssrA gene; the 2 termini fold to resemble tRNA(Ala) and it encodes a 'tag peptide', a short internal open reading frame. During trans-translation Ala-aminoacylated tmRNA acts like a tRNA, entering the A-site of stalled ribosomes, displacing the stalled mRNA. The ribosome then switches to translate the ORF on the tmRNA; the nascent peptide is terminated with the 'tag peptide' encoded by the tmRNA and targeted for degradation. The ribosome is freed to recommence translation, which seems to be the essential function of trans-translation. This chain is SsrA-binding protein, found in Mycolicibacterium paratuberculosis (strain ATCC BAA-968 / K-10) (Mycobacterium paratuberculosis).